The primary structure comprises 252 residues: UPF0736 protein OB1207 (252 aa).

This sequence belongs to the UPF0736 family.

The polypeptide is UPF0736 protein OB1207 (Oceanobacillus iheyensis (strain DSM 14371 / CIP 107618 / JCM 11309 / KCTC 3954 / HTE831)).